A 107-amino-acid chain; its full sequence is Nucleoid-associated protein BLi00029/BL02358 (107 aa).

Residues 1 to 27 (MRGGMGNMQKMMKQMQKMQKDMQKAQE) are disordered. Over residues 8-17 (MQKMMKQMQK) the composition is skewed to low complexity. Basic and acidic residues predominate over residues 18-27 (MQKDMQKAQE).

It belongs to the YbaB/EbfC family. Homodimer.

It localises to the cytoplasm. The protein localises to the nucleoid. Binds to DNA and alters its conformation. May be involved in regulation of gene expression, nucleoid organization and DNA protection. This Bacillus licheniformis (strain ATCC 14580 / DSM 13 / JCM 2505 / CCUG 7422 / NBRC 12200 / NCIMB 9375 / NCTC 10341 / NRRL NRS-1264 / Gibson 46) protein is Nucleoid-associated protein BLi00029/BL02358.